Reading from the N-terminus, the 219-residue chain is Ribosomal RNA small subunit methyltransferase Nep1 (219 aa).

S-adenosyl-L-methionine contacts are provided by residues Gly178, Gly183, and 196 to 201 (LYKAPL).

It belongs to the class IV-like SAM-binding methyltransferase superfamily. RNA methyltransferase NEP1 family. In terms of assembly, homodimer.

The enzyme catalyses a pseudouridine in rRNA + S-adenosyl-L-methionine = an N(1)-methylpseudouridine in rRNA + S-adenosyl-L-homocysteine + H(+). Its function is as follows. Methyltransferase involved in ribosomal biogenesis. Specifically catalyzes the N1-methylation of the pseudouridine corresponding to position 914 in M.jannaschii 16S rRNA. The polypeptide is Ribosomal RNA small subunit methyltransferase Nep1 (Thermococcus onnurineus (strain NA1)).